Consider the following 445-residue polypeptide: Cytochrome b (445 aa).

Topologically, residues 2–49 (SGIPHDHYEPRTGIEKWLHSRLPIVALAYDTIMIPTPRNLNWMWIWGV) are cytoplasmic. The chain crosses the membrane as a helical span at residues 50 to 67 (VLAFCLVLQIVTGIVLAM). Residues 68–94 (HYTPHVDLAFASVEHIMRNVNGGFMLR) lie on the Periplasmic side of the membrane. Residues 95-113 (YLHANGASLFFIAVYLHIF) traverse the membrane as a helical segment. Positions 97 and 111 each coordinate heme b. Residues 114 to 129 (RGLYYGSYKAPREVTW) are Cytoplasmic-facing. Residues 130–149 (IVGMLIYLAMMATAFMGYVL) traverse the membrane as a helical segment. Over 150–193 (PWGQMSFWGATVITGLFGAIPGIGHSIQTWLLGGPAVDNATLNR) the chain is Periplasmic. The helical transmembrane segment at 194-216 (FFSLHYLLPFVIAALVAIHIWAF) threads the bilayer. Residues histidine 198 and histidine 212 each coordinate heme b. The Cytoplasmic portion of the chain corresponds to 217–252 (HSTGNNNPTGVEVRRTSKAEAQKDTVPFWPYFIIKD). The helical transmembrane segment at 253 to 270 (VFALAVVLLVFFAIVGFM) threads the bilayer. Residues 271–329 (PNYLGHPDNYIEANPLSTPAHIVPEWYFLPFYAILRAFTADVWVVQIANFISFGIIDAK) are Periplasmic-facing. A helical transmembrane segment spans residues 330-346 (FFGVLAMFGAILVMALV). Over 347–364 (PWLDTSPVRSGRYRPMFK) the chain is Cytoplasmic. A helical transmembrane segment spans residues 365–382 (IYFWLLAADFVILTWVGA). Topologically, residues 383–388 (QQTTFP) are periplasmic. Residues 389–408 (YDWISLIASAYWFAYFLVIL) traverse the membrane as a helical segment. Residues 409–445 (PILGAIEKPVAPPATIEEDFNAHYSPATGGTKTVVAE) are Cytoplasmic-facing.

The protein belongs to the cytochrome b family. The main subunits of complex b-c1 are: cytochrome b, cytochrome c1 and the Rieske protein. Heme b is required as a cofactor.

Its subcellular location is the cell membrane. Functionally, component of the ubiquinol-cytochrome c reductase complex (complex III or cytochrome b-c1 complex), which is a respiratory chain that generates an electrochemical potential coupled to ATP synthesis. The sequence is that of Cytochrome b (petB) from Cereibacter sphaeroides (Rhodobacter sphaeroides).